The sequence spans 152 residues: Protein CHLOROPLAST VESICULATION (152 aa).

A chloroplast-targeting transit peptide spans 1–22; that stretch reads MAGRISCCLNLPPLDSNSAQSL. A helical transmembrane segment spans residues 48-65; the sequence is CSFVLGVAATVVIGGIQI. The segment at 92-152 is important for chloroplast destabilization and the formation of CV-containing vesicles; the sequence is RWSDKRTCPP…RVNRGGCFSV (61 aa).

Interacts with the photosystem II subunit PsbO1 via its C-terminal region in the chloroplast thylakoid membrane and in CV-containing vesicles (CCVs). Mostly expressed in senescent and mature leaves but not in young leaves.

The protein localises to the plastid. Its subcellular location is the chloroplast membrane. It localises to the chloroplast thylakoid membrane. The protein resides in the chloroplast envelope. It is found in the vacuole. The protein localises to the vesicle. In terms of biological role, triggers stress-induced chloroplast degradation, independently of autophagy and senescence-associated vacuoles. After targeting to the chloroplast, triggers its destabilization and subsequent disassembly, inducing the formation of CV-containing vesicles (CCVs) carrying stromal proteins, envelope membrane proteins, and thylakoid membrane proteins which are released from the chloroplasts and mobilized to the vacuole for proteolysis. This chain is Protein CHLOROPLAST VESICULATION, found in Arabidopsis thaliana (Mouse-ear cress).